Consider the following 102-residue polypeptide: Citrate lyase acyl carrier protein (102 aa).

At Ser14 the chain carries O-(phosphoribosyl dephospho-coenzyme A)serine.

This sequence belongs to the CitD family. Oligomer with a subunit composition of (alpha,beta,gamma)6.

It is found in the cytoplasm. Its function is as follows. Covalent carrier of the coenzyme of citrate lyase. This chain is Citrate lyase acyl carrier protein, found in Streptococcus pyogenes serotype M4 (strain MGAS10750).